A 195-amino-acid chain; its full sequence is FMN-dependent NADH:quinone oxidoreductase (195 aa).

FMN-binding positions include Ser-10, Ser-16–Ser-18, and Met-91–Phe-94.

The protein belongs to the azoreductase type 1 family. As to quaternary structure, homodimer. FMN serves as cofactor.

The catalysed reaction is 2 a quinone + NADH + H(+) = 2 a 1,4-benzosemiquinone + NAD(+). It catalyses the reaction N,N-dimethyl-1,4-phenylenediamine + anthranilate + 2 NAD(+) = 2-(4-dimethylaminophenyl)diazenylbenzoate + 2 NADH + 2 H(+). Its function is as follows. Quinone reductase that provides resistance to thiol-specific stress caused by electrophilic quinones. In terms of biological role, also exhibits azoreductase activity. Catalyzes the reductive cleavage of the azo bond in aromatic azo compounds to the corresponding amines. The chain is FMN-dependent NADH:quinone oxidoreductase from Aeromonas salmonicida (strain A449).